A 475-amino-acid chain; its full sequence is Pentatricopeptide repeat-containing protein At1g29710, mitochondrial (475 aa).

The transit peptide at 1-37 directs the protein to the mitochondrion; sequence MVRLWCGKLRLWKPYLALATQSRNSWFCSGGGAPSHH. PPR repeat units lie at residues 83–117, 118–148, 153–183, 184–218, 219–254, and 255–285; these read AQNV…GYAM, DLIR…IIAL, DVGA…MPEW, NSGT…GNKP, NGEI…GIVP, and SMEH…MPME. Residues 350–380 form a type E(+) motif region; that stretch reads YFYSTFRPVDSSHPQMNIIYETLMSLRSQLK. Positions 381–475 are type DYW motif; it reads EMGYVPDTRY…NGVCRCNNLW (95 aa).

It belongs to the PPR family. PCMP-H subfamily.

The protein resides in the mitochondrion. This chain is Pentatricopeptide repeat-containing protein At1g29710, mitochondrial (PCMP-H67), found in Arabidopsis thaliana (Mouse-ear cress).